We begin with the raw amino-acid sequence, 488 residues long: Retinoic acid receptor RXR-alpha (488 aa).

The modulating stretch occupies residues 1 to 160; the sequence is MSSAAMDTKH…GAMASFTKHI (160 aa). A Glycyl lysine isopeptide (Lys-Gly) (interchain with G-Cter in SUMO) cross-link involves residue K134. Residues 158–233 constitute a DNA-binding region (nuclear receptor); it reads KHICAICGDR…MGMKREAVQE (76 aa). Positions 161, 164, 178, and 181 each coordinate Zn(2+). The NR C4-type zinc finger occupies 161–181; sequence CAICGDRSSGKHYGVYSCEGC. The nuclear localization signal stretch occupies residues 186-191; that stretch reads KRTVRK. Positions 197, 203, 213, and 216 each coordinate Zn(2+). An NR C4-type zinc finger spans residues 197 to 216; it reads CRDSKDCMIDKRQRNRCQYC. Residues 227–250 form a hinge region; it reads KREAVQEERQRGKERNENEVESSN. The segment covering 232-244 has biased composition (basic and acidic residues); that stretch reads QEERQRGKERNEN. The segment at 232–256 is disordered; it reads QEERQRGKERNENEVESSNSANEDM. The NR LBD domain occupies 253–484; sequence NEDMPVEKIL…TFLMEMLEAP (232 aa). Residues R342 and A353 each contribute to the 9-cis-retinoate site. Residues R342 and A353 each coordinate all-trans-retinoate. The required for nuclear export stretch occupies residues 374-394; sequence RVLTELVSKMRDMQMDKTELG. The interval 473–484 is AF-2; the sequence is IDTFLMEMLEAP.

Belongs to the nuclear hormone receptor family. NR2 subfamily. In terms of assembly, homodimer. Heterodimer; with a rar molecule. Binds DNA preferentially as a rar/rxr heterodimer. Interacts with coactivator ncoa3 and with senp6. In terms of processing, sumoylated on Lys-134; which negatively regulates transcriptional activity. Desumoylated specifically by SENP6.

The protein localises to the nucleus. Its function is as follows. Receptor for retinoic acid that acts as a transcription factor. Forms homo- or heterodimers with retinoic acid receptors (rars) and binds to target response elements in response to their ligands, all-trans or 9-cis retinoic acid, to regulate gene expression in various biological processes. The rar/rxr heterodimers bind to the retinoic acid response elements (RARE) composed of tandem 5'-AGGTCA-3' sites known as DR1-DR5 to regulate transcription. The high affinity ligand for rxrs is 9-cis retinoic acid. In the absence of ligand, the rar/rxr heterodimers associate with a multiprotein complex containing transcription corepressors that induce histone deacetylation, chromatin condensation and transcriptional suppression. On ligand binding, the corepressors dissociate from the receptors and coactivators are recruited leading to transcriptional activation. The sequence is that of Retinoic acid receptor RXR-alpha (rxra) from Xenopus laevis (African clawed frog).